The sequence spans 232 residues: MSQPKPILYYDERSPPVRSCLMLIKLLDIDVELRFVNLFKGEQFQKDFLALNPQHSVPTLVHGDLVLTDSHAILIHLAEKFDEGGSLWPQEHAERMKVLNLLLFECSFLFRRDSDFMSATVRQGFANVDVAHHERKLTEAYIIMERYLENSDFMAGPQLTLADLSIVTTLSTVNLMFPLSQFPRLRRWFTAMQQLDAYEANCSGLEKLRQTMESVGSFQFPSSSAVVTEKVE.

Residues 4 to 85 (PKPILYYDER…HLAEKFDEGG (82 aa)) form the GST N-terminal domain. Residues 91 to 218 (EHAERMKVLN…RQTMESVGSF (128 aa)) form the GST C-terminal domain.

Belongs to the GST superfamily. Epsilon family. Expressed in the adult ovary (at protein level).

It carries out the reaction RX + glutathione = an S-substituted glutathione + a halide anion + H(+). In terms of biological role, conjugation of reduced glutathione to a wide number of exogenous and endogenous hydrophobic electrophiles. Essential for ecdysteroid biosynthesis. May be involved in detoxification. The polypeptide is Glutathione S-transferase E14 (Drosophila melanogaster (Fruit fly)).